Reading from the N-terminus, the 160-residue chain is Nuclear transcription factor Y subunit B-5 (160 aa).

A DNA-binding region spans residues 56 to 62; it reads LPIANVG. The segment at 83–94 is subunit association domain (SAD); it reads MQECVSEFISFV.

It belongs to the NFYB/HAP3 subunit family. In terms of assembly, heterotrimeric transcription factor composed of three components, NF-YA, NF-YB and NF-YC. NF-YB and NF-YC must interact and dimerize for NF-YA association and DNA binding. Expressed in flowers and siliques.

It localises to the nucleus. In terms of biological role, component of the NF-Y/HAP transcription factor complex. The NF-Y complex stimulates the transcription of various genes by recognizing and binding to a CCAAT motif in promoters. The sequence is that of Nuclear transcription factor Y subunit B-5 (NFYB5) from Arabidopsis thaliana (Mouse-ear cress).